Here is a 529-residue protein sequence, read N- to C-terminus: Tyrosinase (529 aa).

The N-terminal stretch at 1–18 (MLLAVLYCLLWSFQTSAG) is a signal peptide. Topologically, residues 19–476 (HFPRACVSSK…YLEQASRIWS (458 aa)) are lumenal, melanosome. 3 N-linked (GlcNAc...) asparagine glycosylation sites follow: Asn-86, Asn-111, and Asn-161. Cu cation-binding residues include His-180, His-202, and His-211. Asn-230 is a glycosylation site (N-linked (GlcNAc...) asparagine). The interval 287-313 (SLCNGTPEGPLQRNPGNHDKSRTPRLP) is disordered. Asn-337 carries N-linked (GlcNAc...) asparagine glycosylation. Cu cation-binding residues include His-363 and His-367. Asn-371 carries N-linked (GlcNAc...) asparagine glycosylation. His-390 lines the Cu cation pocket. Residues 477–497 (WLLGAAMVGAVLTALLAGLVS) traverse the membrane as a helical segment. Over 498-529 (LLCRHKRKQLPEEKQPLLMEKEDYHSLYQSHL) the chain is Cytoplasmic.

This sequence belongs to the tyrosinase family. As to quaternary structure, forms an OPN3-dependent complex with DCT in response to blue light in melanocytes. Requires Cu(2+) as cofactor. In terms of processing, glycosylated.

It is found in the melanosome membrane. The protein resides in the melanosome. It carries out the reaction 2 L-dopa + O2 = 2 L-dopaquinone + 2 H2O. The enzyme catalyses L-tyrosine + O2 = L-dopaquinone + H2O. It catalyses the reaction 2 5,6-dihydroxyindole-2-carboxylate + O2 = 2 indole-5,6-quinone-2-carboxylate + 2 H2O. In terms of biological role, this is a copper-containing oxidase that functions in the formation of pigments such as melanins and other polyphenolic compounds. Catalyzes the initial and rate limiting step in the cascade of reactions leading to melanin production from tyrosine. In addition to hydroxylating tyrosine to DOPA (3,4-dihydroxyphenylalanine), also catalyzes the oxidation of DOPA to DOPA-quinone, and possibly the oxidation of DHI (5,6-dihydroxyindole) to indole-5,6 quinone. This Gorilla gorilla gorilla (Western lowland gorilla) protein is Tyrosinase (TYR).